We begin with the raw amino-acid sequence, 147 residues long: Hemoglobin subunit beta (147 aa).

One can recognise a Globin domain in the interval His2–His147. Heme b contacts are provided by His63 and His92.

The protein belongs to the globin family. As to quaternary structure, heterotetramer of two alpha chains and two beta chains. In terms of tissue distribution, red blood cells.

In terms of biological role, involved in oxygen transport from the lung to the various peripheral tissues. The sequence is that of Hemoglobin subunit beta (HBB) from Lepidosiren paradoxus (South American lungfish).